We begin with the raw amino-acid sequence, 333 residues long: MLARWLQRQWFDQRRRQPALWLLLPLAWLYAGLSALNRLLAKPKHLPVPVIVVGNIIVGGAGKTPLTLWLARQLRDRGWRPGIVSRGYGRSGDEVRTVSAQSRPEEVGDEPLLLARRSGVPVWVGRHRAVAGEALLAAHPEVNVLLCDDGLQHYALARDVELVVFDVRGAGNGWRLPVGPLREPVSRLASADAVICNGQPETLLPTATPSFEMSLKPGLFYRVDVAGQSASAESLRDRGRLYALAGIGNPERFFRTLESLGLSCETRPFPDHHRYVAADLAFAKDGILLMTEKDAVKCAGMTAGETWVLPVQAELSPALIDLIVEKLRGRQVA.

57–64 (IVGGAGKT) contacts ATP.

It belongs to the LpxK family.

The enzyme catalyses a lipid A disaccharide + ATP = a lipid IVA + ADP + H(+). It participates in glycolipid biosynthesis; lipid IV(A) biosynthesis; lipid IV(A) from (3R)-3-hydroxytetradecanoyl-[acyl-carrier-protein] and UDP-N-acetyl-alpha-D-glucosamine: step 6/6. Functionally, transfers the gamma-phosphate of ATP to the 4'-position of a tetraacyldisaccharide 1-phosphate intermediate (termed DS-1-P) to form tetraacyldisaccharide 1,4'-bis-phosphate (lipid IVA). The sequence is that of Tetraacyldisaccharide 4'-kinase from Dechloromonas aromatica (strain RCB).